The sequence spans 309 residues: tRNA-cytidine(32) 2-sulfurtransferase (309 aa).

Residues 45 to 50 (SGGKDS) carry the PP-loop motif motif. The [4Fe-4S] cluster site is built by Cys-120, Cys-123, and Cys-211.

This sequence belongs to the TtcA family. In terms of assembly, homodimer. Mg(2+) serves as cofactor. Requires [4Fe-4S] cluster as cofactor.

It localises to the cytoplasm. It catalyses the reaction cytidine(32) in tRNA + S-sulfanyl-L-cysteinyl-[cysteine desulfurase] + AH2 + ATP = 2-thiocytidine(32) in tRNA + L-cysteinyl-[cysteine desulfurase] + A + AMP + diphosphate + H(+). The protein operates within tRNA modification. Functionally, catalyzes the ATP-dependent 2-thiolation of cytidine in position 32 of tRNA, to form 2-thiocytidine (s(2)C32). The sulfur atoms are provided by the cysteine/cysteine desulfurase (IscS) system. The chain is tRNA-cytidine(32) 2-sulfurtransferase from Psychromonas ingrahamii (strain DSM 17664 / CCUG 51855 / 37).